Reading from the N-terminus, the 313-residue chain is DDRGK domain-containing protein 1 (313 aa).

The helical transmembrane segment at 1–28 threads the bilayer; sequence MVSPVVYLVVAALLVGLILFLTRGRGRA. The mediates interaction with CDK5RAP3 stretch occupies residues 1–113; that stretch reads MVSPVVYLVV…IEKPVETHLS (113 aa). Residues 29–313 lie on the Cytoplasmic side of the membrane; that stretch reads AAAAQEPLHN…GRETPAQAPA (285 aa). A disordered region spans residues 40–88; that stretch reads EVPAAAGRVARPQPLEPEEQRAAGRPRRRRDLGSRLQAQRRAQRVAWAD. Ser73 and Ser113 each carry phosphoserine. Over residues 73 to 87 the composition is skewed to low complexity; sequence SRLQAQRRAQRVAWA. Residues 117–215 form a mediates interaction with TRIP4 region; the sequence is GAKKLRKLEE…MTEEQSHSFL (99 aa). The tract at residues 130–185 is disordered; sequence RKAQREAEEAEREERKRLESQREAEWKKEEERLRLEEEQKEEEERKAQEEQAQREH. Residues 194-208 carry the UFM1-interacting motif (UFIM) motif; it reads TFVVVEEGVGETMTE. Residues 215–313 are mediates interaction with UFL1; the sequence is LAEFINYIKQ…GRETPAQAPA (99 aa). A PCI domain is found at 228 to 272; sequence VLLEDLASQVGLRTQDTINRIQDLLAEGTLTGVIDDRGKFIYITP. Lys266 participates in a covalent cross-link: Glycyl lysine isopeptide (Lys-Gly) (interchain with G-Cter in UFM1).

This sequence belongs to the DDRGK1 family. Component of the UFM1 ribosome E3 ligase (UREL) complex, composed of UFL1, DDRGK1 and CDK5RAP3. Interacts with (unphosphorylated) ERN1/IRE1-alpha; interaction is dependent on UFM1 and takes place in response to endoplasmic reticulum stress, regulating ERN1/IRE1-alpha stability. Interacts with NFKBIA. Interacts with SOX9. In terms of processing, ubiquitinated. Ubiquitination probably triggers proteasomal degradation and is negatively regulated by UFL1, the enzyme involved in the ufmylation of DDRGK1. Post-translationally, ufmylated; conjugated to ubiquitin-like protein UFM1, probably at Lys-266 by UFL1. The relevance of ufmylation is however unclear: as DDRGK1 acts as a substrate adapter for ufmylation, it is uncertain whether ufmylation is a collateral effect of the ufmylation process or whether it is required to regulate its activity.

It localises to the endoplasmic reticulum membrane. Its function is as follows. Component of the UFM1 ribosome E3 ligase (UREL) complex, a multiprotein complex that catalyzes ufmylation of endoplasmic reticulum-docked proteins. The UREL complex plays a key role in ribosome recycling by mediating mono-ufmylation of the RPL26/uL24 subunit of the 60S ribosome following ribosome dissociation: ufmylation weakens the junction between post-termination 60S subunits and SEC61 translocons, promoting release and recycling of the large ribosomal subunit from the endoplasmic reticulum membrane. Ufmylation of RPL26/uL24 and subsequent 60S ribosome recycling either take place after normal termination of translation or after ribosome stalling during cotranslational translocation at the endoplasmic reticulum. Within the UREL complex, DDRGK1 tethers the complex to the endoplasmic reticulum membrane to restrict its activity to endoplasmic reticulum-docked ribosomes and acts as an ufmylation 'reader': following RPL26/uL24 ufmylation, DDRGK1 specifically binds to ufmylated RPL26/uL24 via its UFIM motif, resulting in stable association between the 60S ribosome and the UREL complex, followed by dissociation of the 60S ribosome subunit from the endoplasmic reticulum membrane. The UREL complex is also involved in reticulophagy in response to endoplasmic reticulum stress by promoting ufmylation of proteins such as CYB5R3 and RPN1, thereby promoting lysosomal degradation of ufmylated proteins. Ufmylation-dependent reticulophagy inhibits the unfolded protein response (UPR) by regulating ERN1/IRE1-alpha stability. Acts as a regulator of immunity by promoting differentiation of B-cells into plasma cells: acts by promoting expansion of the endoplasmic reticulum and regulating the unfolded protein response (UPR). May also be required for TRIP4 ufmylation. May play a role in NF-kappa-B-mediated transcription through regulation of the phosphorylation and the degradation of NFKBIA, the inhibitor of NF-kappa-B. Plays a role in cartilage development through SOX9, inhibiting the ubiquitin-mediated proteasomal degradation of this transcriptional regulator. Required for stabilization and ufmylation of ATG9A. The polypeptide is DDRGK domain-containing protein 1 (Bos taurus (Bovine)).